The following is a 428-amino-acid chain: 3-phosphoshikimate 1-carboxyvinyltransferase (428 aa).

Lys21, Ser22, and Arg26 together coordinate 3-phosphoshikimate. Lys21 provides a ligand contact to phosphoenolpyruvate. The phosphoenolpyruvate site is built by Gly92 and Arg120. Residues Ser165, Gln167, Asp313, and Lys340 each contribute to the 3-phosphoshikimate site. Gln167 contributes to the phosphoenolpyruvate binding site. Catalysis depends on Asp313, which acts as the Proton acceptor. The phosphoenolpyruvate site is built by Arg344 and Arg386.

This sequence belongs to the EPSP synthase family. In terms of assembly, monomer.

The protein resides in the cytoplasm. It carries out the reaction 3-phosphoshikimate + phosphoenolpyruvate = 5-O-(1-carboxyvinyl)-3-phosphoshikimate + phosphate. It participates in metabolic intermediate biosynthesis; chorismate biosynthesis; chorismate from D-erythrose 4-phosphate and phosphoenolpyruvate: step 6/7. Functionally, catalyzes the transfer of the enolpyruvyl moiety of phosphoenolpyruvate (PEP) to the 5-hydroxyl of shikimate-3-phosphate (S3P) to produce enolpyruvyl shikimate-3-phosphate and inorganic phosphate. This is 3-phosphoshikimate 1-carboxyvinyltransferase from Carboxydothermus hydrogenoformans (strain ATCC BAA-161 / DSM 6008 / Z-2901).